Here is a 123-residue protein sequence, read N- to C-terminus: Ribosome-binding factor A (123 aa).

This sequence belongs to the RbfA family. In terms of assembly, monomer. Binds 30S ribosomal subunits, but not 50S ribosomal subunits or 70S ribosomes.

It is found in the cytoplasm. Functionally, one of several proteins that assist in the late maturation steps of the functional core of the 30S ribosomal subunit. Associates with free 30S ribosomal subunits (but not with 30S subunits that are part of 70S ribosomes or polysomes). Required for efficient processing of 16S rRNA. May interact with the 5'-terminal helix region of 16S rRNA. The sequence is that of Ribosome-binding factor A from Geotalea daltonii (strain DSM 22248 / JCM 15807 / FRC-32) (Geobacter daltonii).